The sequence spans 640 residues: PAN2-PAN3 deadenylation complex subunit PAN3 (640 aa).

A C3H1-type zinc finger spans residues 17 to 46 (ENKDILCRNVLIYGHCRYEDQGCTYNHDQN). 2 stretches are compositionally biased toward polar residues: residues 43 to 53 (HDQNKNSSQPE) and 63 to 87 (DSPSFTPSGQSTVLPKKTTLSSQAA). Residues 43-101 (HDQNKNSSQPEAPSKKMFNVDSPSFTPSGQSTVLPKKTTLSSQAASAAPFTPRGGGTPT) form a disordered region. Residues 237–498 (QVIPNSGLPQ…TIEHFMTGIA (262 aa)) are pseudokinase domain. ATP is bound by residues asparagine 263, arginine 288, 338–345 (DFHPLSKT), and 397–398 (SK). Residues 499 to 537 (SQMTTFFDLALQDNDEKLFHLAREVENGRIARSLMKLLT) adopt a coiled-coil conformation. Residues 538-640 (ILERGDYDGV…SKTGAPGANT (103 aa)) are knob domain.

This sequence belongs to the protein kinase superfamily. PAN3 family. Homodimer. Forms a heterotrimer with a catalytic subunit PAN2 to form the poly(A)-nuclease (PAN) deadenylation complex. Interacts (via PAM-2 motif) with poly(A)-binding protein PAB1 (via PABC domain), conferring substrate specificity of the enzyme complex.

The protein resides in the cytoplasm. Its function is as follows. Regulatory subunit of the poly(A)-nuclease (PAN) deadenylation complex, one of two cytoplasmic mRNA deadenylases involved in mRNA turnover. PAN specifically shortens poly(A) tails of RNA and the activity is stimulated by poly(A)-binding protein PAB1. PAN deadenylation is followed by rapid degradation of the shortened mRNA tails by the CCR4-NOT complex. Deadenylated mRNAs are then degraded by two alternative mechanisms, namely exosome-mediated 3'-5' exonucleolytic degradation, or deadenylation-dependent mRNA decaping and subsequent 5'-3' exonucleolytic degradation by XRN1. May also be involved in post-transcriptional maturation of mRNA poly(A) tails. PAN3 acts as a positive regulator for PAN activity, recruiting the catalytic subunit PAN2 to mRNA via its interaction with RNA and with PAB1. The sequence is that of PAN2-PAN3 deadenylation complex subunit PAN3 from Chaetomium thermophilum (strain DSM 1495 / CBS 144.50 / IMI 039719) (Thermochaetoides thermophila).